Reading from the N-terminus, the 728-residue chain is Probable LRR receptor-like serine/threonine-protein kinase At1g14390 (728 aa).

The signal sequence occupies residues 1–27 (MHSSSKSQAFSLTFLLFLFLLPSVSES). Over 28–356 (QLISSESRTL…EEDTGIELGL (329 aa)) the chain is Extracellular. N-linked (GlcNAc...) asparagine glycans are attached at residues asparagine 55 and asparagine 85. LRR repeat units follow at residues 74–96 (NGHV…RFSS), 106–130 (LSNL…IIRL), 131–155 (SSSL…ISSL), 157–178 (NLRS…LRGL), 179–202 (SNLQ…LASN), 204–224 (ITIS…IKKL), 225–248 (NKLQ…LLSL), 249–272 (PSLQ…SLCN), and 274–295 (KLRI…CFSS). Asparagine 138 and asparagine 169 each carry an N-linked (GlcNAc...) asparagine glycan. Asparagine 210 is a glycosylation site (N-linked (GlcNAc...) asparagine). Asparagine 253 and asparagine 267 each carry an N-linked (GlcNAc...) asparagine glycan. A helical membrane pass occupies residues 357-377 (VIGIIIGVILVSAVLAGLVLV). Over 378 to 728 (RMRKSRSKEE…ENLGLGGSEL (351 aa)) the chain is Cytoplasmic. One can recognise a Protein kinase domain in the interval 421–709 (TMRSAVIGLS…DVVWNLQYTI (289 aa)).

The protein belongs to the protein kinase superfamily. Ser/Thr protein kinase family.

The protein resides in the membrane. It carries out the reaction L-seryl-[protein] + ATP = O-phospho-L-seryl-[protein] + ADP + H(+). It catalyses the reaction L-threonyl-[protein] + ATP = O-phospho-L-threonyl-[protein] + ADP + H(+). This Arabidopsis thaliana (Mouse-ear cress) protein is Probable LRR receptor-like serine/threonine-protein kinase At1g14390.